A 635-amino-acid chain; its full sequence is Biosynthetic arginine decarboxylase (635 aa).

N6-(pyridoxal phosphate)lysine is present on lysine 101. A substrate-binding site is contributed by 284–294; that stretch reads VDVGGGLGVDY.

This sequence belongs to the Orn/Lys/Arg decarboxylase class-II family. SpeA subfamily. Mg(2+) serves as cofactor. Pyridoxal 5'-phosphate is required as a cofactor.

The enzyme catalyses L-arginine + H(+) = agmatine + CO2. Its pathway is amine and polyamine biosynthesis; agmatine biosynthesis; agmatine from L-arginine: step 1/1. Its function is as follows. Catalyzes the biosynthesis of agmatine from arginine. The chain is Biosynthetic arginine decarboxylase from Tolumonas auensis (strain DSM 9187 / NBRC 110442 / TA 4).